Consider the following 113-residue polypeptide: U11-theraphotoxin-Hhn1k (113 aa).

A signal peptide spans 1-21; it reads MNTVRVTFLLVFVLAVSLGQA. A propeptide spanning residues 22-74 is cleaved from the precursor; the sequence is DKDENRMEMQEKTEQGKSYLDFAENLLLQKLEELEAKLLEEDSEESRNSRQKR. The disordered stretch occupies residues 61–83; that stretch reads EEDSEESRNSRQKRCIGEGVPCD. Intrachain disulfides connect Cys-75–Cys-90, Cys-82–Cys-95, and Cys-89–Cys-110.

Belongs to the neurotoxin 14 (magi-1) family. 01 (HNTX-16) subfamily. As to expression, expressed by the venom gland.

It is found in the secreted. In terms of biological role, probable ion channel inhibitor. This chain is U11-theraphotoxin-Hhn1k, found in Cyriopagopus hainanus (Chinese bird spider).